The primary structure comprises 841 residues: Neuronal tyrosine-phosphorylated phosphoinositide-3-kinase adapter 1 (841 aa).

Disordered regions lie at residues 1–45, 64–448, 655–679, 745–769, and 812–833; these read MNLL…PGVR, PASQ…PAAL, RAWN…TSGI, RPCS…PLPP, and LPSW…RRQH. Positions 8–25 are enriched in basic and acidic residues; sequence TKLEWRQHKEEEAKRSSS. The span at 26–39 shows a compositional bias: low complexity; the sequence is KEVAPAGSAGPAAG. Residues 76-186 form an involved in CYFIP1- and NCKAP1-binding region; sequence SAMAPRSLSC…DESCPPGPSP (111 aa). A compositionally biased stretch (gly residues) spans 94-103; it reads VGGGPGGASG. A compositionally biased stretch (basic residues) spans 114–123; sequence PPAKPRRHPS. Residues 167 to 176 show a composition bias toward polar residues; that stretch reads SPNTQLSVSF. Residues 224 to 243 show a composition bias toward gly residues; it reads FRGGGRSGGGLAGPPLGGGG. Acidic residues predominate over residues 252–261; it reads SDSEESEAIY. Residues 279–295 show a composition bias toward pro residues; the sequence is GPPPLTATSPPQQPHAL. Pro residues predominate over residues 759-769; sequence PALPLPLPLPP.

This sequence belongs to the NYAP family. As to quaternary structure, interacts with ACOT9, ARHGAP26 and PIK3R2. Interacts with components of the WAVE1 complex, CYFIP1 and NCKAP1; this interaction mediates PI3K-WAVE1 association and actin cytoskeleton remodeling. In terms of processing, phosphorylated on tyrosine residues by FYN upon stimulation with CNTN5.

Functionally, activates PI3K and concomitantly recruits the WAVE1 complex to the close vicinity of PI3K and regulates neuronal morphogenesis. The polypeptide is Neuronal tyrosine-phosphorylated phosphoinositide-3-kinase adapter 1 (NYAP1) (Homo sapiens (Human)).